Here is a 548-residue protein sequence, read N- to C-terminus: Chaperonin GroEL (548 aa).

ATP is bound by residues 29–32 (TMGP), lysine 50, 86–90 (DGTTT), glycine 414, 478–480 (NAA), and aspartate 494.

Belongs to the chaperonin (HSP60) family. In terms of assembly, forms a cylinder of 14 subunits composed of two heptameric rings stacked back-to-back. Interacts with the co-chaperonin GroES.

It localises to the cytoplasm. It catalyses the reaction ATP + H2O + a folded polypeptide = ADP + phosphate + an unfolded polypeptide.. Its function is as follows. Together with its co-chaperonin GroES, plays an essential role in assisting protein folding. The GroEL-GroES system forms a nano-cage that allows encapsulation of the non-native substrate proteins and provides a physical environment optimized to promote and accelerate protein folding. Functionally, may play a protective role against the defense mechanisms generated by the infected macrophages. This chain is Chaperonin GroEL, found in Legionella pneumophila.